Here is a 212-residue protein sequence, read N- to C-terminus: Pyridoxine/pyridoxamine 5'-phosphate oxidase (212 aa).

Residues 1-20 (MSDSAMEPQNPLTSGDFTAA) form a disordered region. FMN is bound by residues 59 to 64 (RMVLLK), 74 to 75 (YT), Lys81, and Gln103. Substrate is bound at residue Lys64. Residues Tyr121, Arg125, and Ser129 each contribute to the substrate site. FMN is bound by residues 138–139 (QS) and Trp183. 189 to 191 (RLH) contributes to the substrate binding site. Arg193 provides a ligand contact to FMN.

Belongs to the pyridoxamine 5'-phosphate oxidase family. As to quaternary structure, homodimer. The cofactor is FMN.

The catalysed reaction is pyridoxamine 5'-phosphate + O2 + H2O = pyridoxal 5'-phosphate + H2O2 + NH4(+). It carries out the reaction pyridoxine 5'-phosphate + O2 = pyridoxal 5'-phosphate + H2O2. It functions in the pathway cofactor metabolism; pyridoxal 5'-phosphate salvage; pyridoxal 5'-phosphate from pyridoxamine 5'-phosphate: step 1/1. Its pathway is cofactor metabolism; pyridoxal 5'-phosphate salvage; pyridoxal 5'-phosphate from pyridoxine 5'-phosphate: step 1/1. Its function is as follows. Catalyzes the oxidation of either pyridoxine 5'-phosphate (PNP) or pyridoxamine 5'-phosphate (PMP) into pyridoxal 5'-phosphate (PLP). The protein is Pyridoxine/pyridoxamine 5'-phosphate oxidase of Azorhizobium caulinodans (strain ATCC 43989 / DSM 5975 / JCM 20966 / LMG 6465 / NBRC 14845 / NCIMB 13405 / ORS 571).